The sequence spans 418 residues: Glutamyl-tRNA reductase (418 aa).

Substrate contacts are provided by residues 49-52 (TCNR), Ser-109, 114-116 (EPQ), and Gln-120. Cys-50 (nucleophile) is an active-site residue. 189-194 (GAGETI) contacts NADP(+).

It belongs to the glutamyl-tRNA reductase family. As to quaternary structure, homodimer.

It carries out the reaction (S)-4-amino-5-oxopentanoate + tRNA(Glu) + NADP(+) = L-glutamyl-tRNA(Glu) + NADPH + H(+). It functions in the pathway porphyrin-containing compound metabolism; protoporphyrin-IX biosynthesis; 5-aminolevulinate from L-glutamyl-tRNA(Glu): step 1/2. Catalyzes the NADPH-dependent reduction of glutamyl-tRNA(Glu) to glutamate 1-semialdehyde (GSA). The protein is Glutamyl-tRNA reductase of Klebsiella pneumoniae subsp. pneumoniae (strain ATCC 700721 / MGH 78578).